The sequence spans 307 residues: UDP-N-acetylenolpyruvoylglucosamine reductase (307 aa).

Residues 34–198 form the FAD-binding PCMH-type domain; sequence TGGNADFYLS…LEAAFTLEPG (165 aa). Arginine 177 is a catalytic residue. Serine 227 functions as the Proton donor in the catalytic mechanism. The active site involves glutamate 297.

Belongs to the MurB family. FAD serves as cofactor.

The protein localises to the cytoplasm. The catalysed reaction is UDP-N-acetyl-alpha-D-muramate + NADP(+) = UDP-N-acetyl-3-O-(1-carboxyvinyl)-alpha-D-glucosamine + NADPH + H(+). It functions in the pathway cell wall biogenesis; peptidoglycan biosynthesis. Its function is as follows. Cell wall formation. In Staphylococcus haemolyticus (strain JCSC1435), this protein is UDP-N-acetylenolpyruvoylglucosamine reductase.